Here is a 573-residue protein sequence, read N- to C-terminus: Delta 8-(E)-sphingolipid desaturase (573 aa).

The region spanning 2–77 is the Cytochrome b5 heme-binding domain; that stretch reads SRVLSRRDIA…FKIWKIGRID (76 aa). Heme is bound by residues histidine 37 and histidine 60. The chain crosses the membrane as a helical span at residues 228 to 248; it reads LFGISFYLLSLKWFAISAICL. A Histidine box-1 motif is present at residues 260-264; it reads HDAGH. A helical transmembrane segment spans residues 273 to 293; that stretch reads VDNIIGMTVASWIGGLSLGWW. A Histidine box-2 motif is present at residues 297 to 301; it reads HNVHH. A run of 3 helical transmembrane segments spans residues 353–372, 393–413, and 422–442; these read YLYY…LSWM, LAGL…KQMP, and VMIS…SHFA. The short motif at 481-485 is the Histidine box-3 element; the sequence is QVIHH.

It belongs to the fatty acid desaturase type 1 family.

The protein localises to the membrane. It carries out the reaction an N-acylsphing-4-enine + 2 Fe(II)-[cytochrome b5] + O2 + 2 H(+) = a (4E,8E)-4-sphinga-4,8-dienine ceramide + 2 Fe(III)-[cytochrome b5] + 2 H2O. Its pathway is lipid metabolism; sphingolipid metabolism. Functionally, delta(8)-fatty-acid desaturase which introduces a double bond at the 8-position in the long-chain base (LCB) of ceramides. Required for the formation of the di-unsaturated sphingoid base (E,E)-sphinga-4,8-dienine during glucosylceramide (GluCer) biosynthesis. This chain is Delta 8-(E)-sphingolipid desaturase, found in Kluyveromyces lactis (strain ATCC 8585 / CBS 2359 / DSM 70799 / NBRC 1267 / NRRL Y-1140 / WM37) (Yeast).